Here is a 975-residue protein sequence, read N- to C-terminus: NLR family member X1 (975 aa).

Residues 1 to 86 (MRWGHHLPRA…EAIQRHRRNL (86 aa)) constitute a mitochondrion transit peptide. The required for interaction with MAVS stretch occupies residues 75–556 (ATEAIQRHRR…RALPLLFNLI (482 aa)). Positions 160 to 483 (QTVVLYGTVG…LRFFLAPCVE (324 aa)) constitute an NACHT domain. 166 to 173 (GTVGTGKS) is an ATP binding site. The tract at residues 556–974 (IKVVPRVFGR…ALLEQLGSSG (419 aa)) is required for the repression of MAVS-induced interferon signaling. The LRRNT domain maps to 667 to 694 (RQVLPPSELLDHLFFHYEFQNQRFSAEV). 8 LRR repeats span residues 695-718 (LSSLRQLNLAGVRMTPVKCTVVAA), 724-747 (RHALDEVNLASCQLDPAGLRTLLP), 749-777 (FLRARKLGLQLNSLGPEACKDLRDLLLHD), 778-801 (QCQITTLRLSNNPLTAAGVAVLME), 811-834 (HLSLLHTGLGDEGLELLAAQLDRN), 835-857 (RQLQELNVAYNGAGDTAALALAR), 858-877 (AAREHPSLELLHLYFNELSS), and 878-899 (EGRQVLRDLGGAAEGGARVVVS). The LRRCT domain occupies 906–970 (VSEYWSVILS…GEVRALLEQL (65 aa)).

The protein belongs to the NLRP family. As to quaternary structure, homohexamer. Interacts with MAVS. Interacts with TUFM. (Microbial infection) Interacts with influenza A virus protein PB1-F2. As to expression, ubiquitously expressed. Strongest expression in mammary gland, heart and muscle. Detected in HeLa, HEK293T, THP-1, HL-60, Raji and Jurkat cell lines (at protein level).

The protein resides in the mitochondrion outer membrane. In terms of biological role, participates in antiviral signaling. Acts as a negative regulator of MAVS-mediated antiviral responses, through the inhibition of the virus-induced RLH (RIG-like helicase)-MAVS interaction. Instead, promotes autophagy by interacting with TUFM and subsequently recruiting the autophagy-related proteins ATG5 and ATG12. Also regulates MAVS-dependent NLRP3 inflammasome activation to attenuate apoptosis. Has no inhibitory function on NF-kappa-B signaling pathway, but enhances NF-kappa-B and JUN N-terminal kinase dependent signaling through the production of reactive oxygen species. Regulates viral mediated-inflammation and energy metabolism in a sex-dependent manner. In females, prevents uncontrolled inflammation and energy metabolism and thus, may contribute to the sex differences observed in infectious and inflammatory diseases. This chain is NLR family member X1 (NLRX1), found in Homo sapiens (Human).